Consider the following 280-residue polypeptide: Succinate dehydrogenase [ubiquinone] iron-sulfur subunit 2, mitochondrial (280 aa).

The N-terminal 28 residues, M1–W28, are a transit peptide targeting the mitochondrion. One can recognise a 2Fe-2S ferredoxin-type domain in the interval F51–M140. 3 residues coordinate [2Fe-2S] cluster: C101, C106, and C121. The 31-residue stretch at D183 to Y213 folds into the 4Fe-4S ferredoxin-type domain. Positions 193, 196, and 199 each coordinate [4Fe-4S] cluster. C203 is a binding site for [3Fe-4S] cluster. Position 208 (W208) interacts with a ubiquinone. Residues C250 and C256 each coordinate [3Fe-4S] cluster. A [4Fe-4S] cluster-binding site is contributed by C260.

This sequence belongs to the succinate dehydrogenase/fumarate reductase iron-sulfur protein family. As to quaternary structure, component of complex II composed of eight subunits in plants: four classical SDH subunits SDH1, SDH2, SDH3 and SDH4 (a flavoprotein (FP), an iron-sulfur protein (IP), and a cytochrome b composed of a large and a small subunit.), as well as four subunits unknown in mitochondria from bacteria and heterotrophic eukaryotes. [2Fe-2S] cluster is required as a cofactor. Requires [3Fe-4S] cluster as cofactor. It depends on [4Fe-4S] cluster as a cofactor. As to expression, ubiquitous. Preferentially expressed in flowers, inflorescences and root tips.

Its subcellular location is the mitochondrion inner membrane. It catalyses the reaction a quinone + succinate = fumarate + a quinol. It participates in carbohydrate metabolism; tricarboxylic acid cycle; fumarate from succinate (eukaryal route): step 1/1. Iron-sulfur protein (IP) subunit of succinate dehydrogenase (SDH) that is involved in complex II of the mitochondrial electron transport chain and is responsible for transferring electrons from succinate to ubiquinone (coenzyme Q). The sequence is that of Succinate dehydrogenase [ubiquinone] iron-sulfur subunit 2, mitochondrial (SDH2-2) from Arabidopsis thaliana (Mouse-ear cress).